Consider the following 444-residue polypeptide: Nuclear distribution protein nudF (444 aa).

Positions Gln-9–Glu-41 constitute a LisH domain. Positions Thr-60–Ser-88 form a coiled coil. A disordered region spans residues Leu-83–Thr-107. WD repeat units lie at residues Ser-112–Lys-153, His-155–Arg-195, Gly-199–Val-239, Ala-243–Ala-282, Gly-285–Leu-345, Gly-347–Lys-386, and Ala-391–Asp-437.

Belongs to the WD repeat LIS1/nudF family. As to quaternary structure, interacts with dynein. Self-associates. Interacts with bnfA, nudC and nudE.

The protein resides in the cytoplasm. It localises to the cytoskeleton. The protein localises to the spindle pole. Positively regulates the activity of the minus-end directed microtubule motor protein dynein. May enhance dynein-mediated microtubule sliding by targeting dynein to the microtubule plus end. Required for nuclear migration during vegetative growth as well as development. Required for retrograde early endosome (EE) transport from the hyphal tip. Required for localization of dynein to the mitotic spindle poles. Recruits additional proteins to the dynein complex at SPBs. The protein is Nuclear distribution protein nudF of Emericella nidulans (strain FGSC A4 / ATCC 38163 / CBS 112.46 / NRRL 194 / M139) (Aspergillus nidulans).